Reading from the N-terminus, the 167-residue chain is Transcriptional repressor NrdR (167 aa).

Residues 3 to 34 (CPFCRNPDSRVVDSRMADDGSAIRRRRQCPEC) fold into a zinc finger. Residues 46–136 (LSVIKRSGVG…VYQAFESLED (91 aa)) enclose the ATP-cone domain. The tract at residues 148-167 (AQEDAAERPATPRKPEKTSL) is disordered.

It belongs to the NrdR family. The cofactor is Zn(2+).

Its function is as follows. Negatively regulates transcription of bacterial ribonucleotide reductase nrd genes and operons by binding to NrdR-boxes. This Pseudarthrobacter chlorophenolicus (strain ATCC 700700 / DSM 12829 / CIP 107037 / JCM 12360 / KCTC 9906 / NCIMB 13794 / A6) (Arthrobacter chlorophenolicus) protein is Transcriptional repressor NrdR.